Consider the following 264-residue polypeptide: SPRY domain-containing SOCS box protein 2 (264 aa).

Positions 1-18 are enriched in polar residues; the sequence is MGQTALARGSSSTPSSHA. Positions 1–53 are disordered; sequence MGQTALARGSSSTPSSHALYSDLSPPEGLEELLSAPPPDLGAQRHHGWNPKDC. A compositionally biased stretch (low complexity) spans 21–34; sequence SDLSPPEGLEELLS. Residues 26-221 form the B30.2/SPRY domain; it reads PEGLEELLSA…VRIRYLGERR (196 aa). Residues 222–264 form the SOCS box domain; sequence AEEPQSLLHLSRLCVRHALGDTRLGQISSLPLPPAMKRYLLYK.

It belongs to the SPSB family. As to quaternary structure, component of the probable ECS(SPSB2) E3 ubiquitin-protein ligase complex which contains CUL5, RNF7/RBX2, Elongin BC complex and SPSB2. Interacts with CUL5, RNF7, ELOB and ELOC. Interacts with MET. Interacts (via B30.2/SPRY domain) with PAWR; this interaction occurs in association with the Elongin BC complex. Interacts with NOS2.

The protein localises to the cytoplasm. It localises to the cytosol. It functions in the pathway protein modification; protein ubiquitination. Substrate recognition component of a SCF-like ECS (Elongin BC-CUL2/5-SOCS-box protein) E3 ubiquitin-protein ligase complex which mediates the ubiquitination and subsequent proteasomal degradation of target proteins. Negatively regulates nitric oxide (NO) production and limits cellular toxicity in activated macrophages by mediating the ubiquitination and proteasomal degradation of NOS2. Acts as a bridge which links NOS2 with the ECS E3 ubiquitin ligase complex components ELOC and CUL5. This Rattus norvegicus (Rat) protein is SPRY domain-containing SOCS box protein 2 (Spsb2).